An 84-amino-acid chain; its full sequence is Cytoplasmic envelopment protein 3 (84 aa).

Gly2 carries the N-myristoyl glycine; by host lipid modification. Residues 40–46 (DLDDLRC) form an asp/Glu-rich (acidic) region.

It belongs to the herpesviridae cytoplasmic envelopment protein 3 family. As to quaternary structure, interacts with cytoplasmic envelopment protein 2; this interaction is essential for the proper localization of each protein to the assembly complex and thus for the production of infectious virus. In terms of processing, myristoylation and palmitoylation (probably on one or more of the nearby cysteines at the N-terminus) enable membrane-binding and Golgi apparatus-specific targeting and are essential for efficient packaging. Post-translationally, phosphorylated. Phosphorylation does not seem to be required for recycling to the host Golgi apparatus. Packaging is selective for underphosphorylated forms.

The protein localises to the virion tegument. Its subcellular location is the virion membrane. The protein resides in the host cell membrane. It localises to the host Golgi apparatus membrane. Plays an important role in the cytoplasmic envelopment of tegument proteins and capsids during the assembly and egress processes. Also participates in viral entry at the fusion step probably by regulating the core fusion machinery. This Gallus gallus (Chicken) protein is Cytoplasmic envelopment protein 3 (MDV023).